The sequence spans 652 residues: MSNDTSPGTSSVDSKSSDPSYGVPGHSHSDKDLLKLSLGAIGIVFGDIGTSPLYALKECFKGHHQLPVDDFHIYGLVSLIFWTMGLVVTVKYVMFIMKADNKGEGGSMSLLSLIIRGANPKLSRWLIVLGVFATALFYGDSMITPAMSVLSAVEGLTVIEPSFDSWVPPVSVVILIGLFCIQARGTESVGRLFGPIMLVYFATLAILGAFNIITRSPAILLALNPYYAIHFFASDPLQGFWALGSVVLSVTGAEALYADMGHFGRQPISLGWYWVVFPALTLNYLGQCALLSADHEAIANPFYFLAPDFLRVPLIILATFAAVIASQAVITGAFSVTQQAIQLGYIPRLRVNHTSASTVGQIYIPSVNWVLMFMVMVLIAMFKNSTNLANAYGIAVTGTMFITSCMMGVLVHRVWHWKAWQSIPLVSFFLLIDGAFFLSNVTKIPEGGWFPLLVGFVVFTMLMTWSRGRHLMAERMRQVAMPIQLFIRSAAASAVRIPGTAIFLTPEDDGVPHALLHNLKHNKILHERVILLTVKIEDVPYVDPHYRASMSSLEDGFYRLIVRYGFMEEPDVPLALNKIEQSGPMLRMDDTSFFISRQTLIPSTHTSMAIWREKLFAWMLRNSESATEFFKLPSNRVVELGSQIELVGSNGK.

Residues 1 to 20 (MSNDTSPGTSSVDSKSSDPS) are compositionally biased toward low complexity. Positions 1 to 26 (MSNDTSPGTSSVDSKSSDPSYGVPGH) are disordered. The next 12 helical transmembrane spans lie at 36–56 (LSLG…LYAL), 76–96 (LVSL…VMFI), 125–145 (WLIV…MITP), 161–181 (PSFD…LFCI), 193–213 (FGPI…FNII), 228–248 (AIHF…SVVL), 270–290 (LGWY…QCAL), 314–334 (LIIL…TGAF), 362–382 (IYIP…IAMF), 391–411 (AYGI…GVLV), 419–439 (AWQS…FFLS), and 444–464 (IPEG…MLMT).

This sequence belongs to the HAK/KUP transporter (TC 2.A.72) family.

The protein resides in the cell inner membrane. The enzyme catalyses K(+)(in) + H(+)(in) = K(+)(out) + H(+)(out). Its function is as follows. Transport of potassium into the cell. Likely operates as a K(+):H(+) symporter. The chain is Probable potassium transport system protein Kup from Zymomonas mobilis subsp. mobilis (strain ATCC 31821 / ZM4 / CP4).